Consider the following 276-residue polypeptide: Bis(5'-nucleosyl)-tetraphosphatase, symmetrical (276 aa).

Belongs to the Ap4A hydrolase family.

It catalyses the reaction P(1),P(4)-bis(5'-adenosyl) tetraphosphate + H2O = 2 ADP + 2 H(+). In terms of biological role, hydrolyzes diadenosine 5',5'''-P1,P4-tetraphosphate to yield ADP. This Mannheimia succiniciproducens (strain KCTC 0769BP / MBEL55E) protein is Bis(5'-nucleosyl)-tetraphosphatase, symmetrical.